We begin with the raw amino-acid sequence, 440 residues long: D-serine dehydratase (440 aa).

Lysine 116 carries the post-translational modification N6-(pyridoxal phosphate)lysine.

The protein belongs to the serine/threonine dehydratase family. DsdA subfamily. In terms of assembly, monomer. Pyridoxal 5'-phosphate serves as cofactor.

The catalysed reaction is D-serine = pyruvate + NH4(+). This chain is D-serine dehydratase, found in Salmonella paratyphi A (strain ATCC 9150 / SARB42).